The following is a 738-amino-acid chain: Integrin beta-2-like protein (738 aa).

Positions 1 to 22 (MLGQCTLLPVLAGLLSLESALS) are cleaved as a signal peptide. Topologically, residues 23–671 (QLCTKDNVST…LVCAEISNTT (649 aa)) are extracellular. Residues 24 to 74 (LCTKDNVSTCQDCIRSGPSCAWCQKLNFTGRGEPDSVRCDTPEQLLLKGCT) enclose the PSI domain. 23 cysteine pairs are disulfide-bonded: Cys-25–Cys-419, Cys-33–Cys-43, Cys-36–Cys-73, Cys-46–Cys-62, Cys-218–Cys-258, Cys-358–Cys-372, Cys-421–Cys-439, Cys-431–Cys-442, Cys-444–Cys-453, Cys-455–Cys-486, Cys-469–Cys-484, Cys-478–Cys-489, Cys-491–Cys-506, Cys-508–Cys-531, Cys-513–Cys-529, Cys-521–Cys-534, Cys-536–Cys-545, Cys-547–Cys-570, Cys-554–Cys-568, Cys-562–Cys-573, Cys-575–Cys-584, Cys-594–Cys-603, and Cys-600–Cys-664. An N-linked (GlcNAc...) asparagine glycan is attached at Asn-29. 8 N-linked (GlcNAc...) asparagine glycosylation sites follow: Asn-50, Asn-102, Asn-173, Asn-226, Asn-252, Asn-342, Asn-360, and Asn-386. Residues 126 to 329 (SVDLYFLMGL…DSSNVAQLIR (204 aa)) form the VWFA domain. I-EGF domains lie at 421–454 (CQEQSQHHSLCGGKGAMECGICRCNSGYAGKNCE), 455–507 (CQTQ…QYCE), 508–546 (CNNVNCERYDGQVCGGPERGHCSCGRCFCRYGFVGSACQ), and 547–585 (CRMSTSGCLNNRMVECSGHGRCYCNRCLCDPGYQPPLCE). A glycan (N-linked (GlcNAc...) asparagine) is linked at Asn-473. Residues Asn-627 and Asn-669 are each glycosylated (N-linked (GlcNAc...) asparagine). The helical transmembrane segment at 672-692 (ILLGVIVGVLLAVIFLLVYCM) threads the bilayer. Residues 693–738 (VYLKGTQKAAKLPRKGGAQSTLAQQPHFQEPHHVEPVWNQERQGTQ) lie on the Cytoplasmic side of the membrane. A disordered region spans residues 709 to 738 (GAQSTLAQQPHFQEPHHVEPVWNQERQGTQ). Residues 710 to 719 (AQSTLAQQPH) show a composition bias toward polar residues.

The protein belongs to the integrin beta chain family. Monomer and homodimer. Unlike integrin beta chains, no alpha chain partner has yet been found. Post-translationally, N-glycosylated. In terms of tissue distribution, expressed predominantly in maturing and mature neutrophils.

The protein resides in the cell membrane. During inflammatory stimulation, plays a role in retaining Cxcl13-expressing cells at the site of the inflammatory response. This chain is Integrin beta-2-like protein, found in Mus musculus (Mouse).